The following is a 115-amino-acid chain: Ribonuclease P protein component (115 aa).

It belongs to the RnpA family. Consists of a catalytic RNA component (M1 or rnpB) and a protein subunit.

It carries out the reaction Endonucleolytic cleavage of RNA, removing 5'-extranucleotides from tRNA precursor.. RNaseP catalyzes the removal of the 5'-leader sequence from pre-tRNA to produce the mature 5'-terminus. It can also cleave other RNA substrates such as 4.5S RNA. The protein component plays an auxiliary but essential role in vivo by binding to the 5'-leader sequence and broadening the substrate specificity of the ribozyme. This chain is Ribonuclease P protein component, found in Natranaerobius thermophilus (strain ATCC BAA-1301 / DSM 18059 / JW/NM-WN-LF).